The chain runs to 539 residues: MADEDGEGIHPSAPHRNGGGGGGSGLHCAGNGGGGGGGPRVVRIVKSESGYGFNVRGQVSEGGQLRSINGELYAPLQHVSAVLPGGAADRAGVRKGDRILEVNGVNVEGATHKQVVDLIRAGEKELILTVLSVPPHEADNLDPSDDSLGQSFYDYTEKQAVPISVPTYKHVEQNGEKFVVYNVYMAGRQLCSKRYREFAILHQNLKREFANFTFPRLPGKWPFSLSEQQLDARRRGLEEYLEKVCSIRVIGESDIMQEFLSESDENYNGVSDVELRVALPDGTTVTVRVKKNSTTDQVYQAIAAKVGMDSTTVNYFALFEVINHSFVRKLAPNEFPHKLYVQNYTSAVPGTCLTIRKWLFTTEEEVLLNDNDLAVTYFFHQAVDDVKKGYIKAEEKSYQLQKLHEQRKMVMYLNMLRTCEGYNEIIFPHCACDSRRKGHVITAISITHFKLHACTEEGQLENQVIAFEWDEMQRWDTDEEGMAFCFEYARGEKKPRWVKIFTPYFNYMHECFERVFCELKWRKENIFQMARSQQRDVAT.

Positions 1–40 (MADEDGEGIHPSAPHRNGGGGGGSGLHCAGNGGGGGGGPR) are disordered. The span at 17-39 (NGGGGGGSGLHCAGNGGGGGGGP) shows a compositional bias: gly residues. A PDZ domain is found at 41–134 (VVRIVKSESG…ELILTVLSVP (94 aa)). Residues serine 49 and serine 60 each carry the phosphoserine modification. Residues 159 to 267 (QAVPISVPTY…EFLSESDENY (109 aa)) enclose the PX domain. One can recognise a Ras-associating domain in the interval 271–360 (SDVELRVALP…TCLTIRKWLF (90 aa)). The tract at residues 271-360 (SDVELRVALP…TCLTIRKWLF (90 aa)) is FERM-like region F1. Residues 371 to 419 (NDLAVTYFFHQAVDDVKKGYIKAEEKSYQLQKLHEQRKMVMYLNMLRTC) are FERM-like region F2. Positions 423-523 (NEIIFPHCAC…RVFCELKWRK (101 aa)) are FERM-like region F3.

In terms of assembly, core component of the SNX27-retromer, a multiprotein complex composed of SNX27, the WASH complex and the retromer complex. Interacts (via the FERM-like regions) with the WASH complex. Interacts with SNX1. Interacts with CYTIP. Interacts with DGKZ. Interacts with MCC. Interacts (via PDZ domain) with a number of target transmembrane proteins (via PDZ-binding motif): ABCC4, ADRB2, ARHGEF7, GRIA1, GRIA2, GRIN1, GRIN2A GRIN2C, KCNJ6, KCNJ9 and SLC2A1/GLUT1. Interacts (via PDZ domains) with SLC9A3; directs SLC9A3 membrane insertion from early endosomes to the plasma membrane. In terms of tissue distribution, expressed in cells of hematopoietic origin.

The protein resides in the early endosome membrane. The protein localises to the cytoplasm. It is found in the cytosol. In terms of biological role, involved in the retrograde transport from endosome to plasma membrane, a trafficking pathway that promotes the recycling of internalized transmembrane proteins. Following internalization, endocytosed transmembrane proteins are delivered to early endosomes and recycled to the plasma membrane instead of being degraded in lysosomes. SNX27 specifically binds and directs sorting of a subset of transmembrane proteins containing a PDZ-binding motif at the C-terminus: following interaction with target transmembrane proteins, associates with the retromer complex, preventing entry into the lysosomal pathway, and promotes retromer-tubule based plasma membrane recycling. SNX27 also binds with the WASH complex. Interacts with membranes containing phosphatidylinositol-3-phosphate (PtdIns(3P)). May participate in establishment of natural killer cell polarity. Recruits CYTIP to early endosomes. The protein is Sorting nexin-27 (Snx27) of Mus musculus (Mouse).